A 374-amino-acid polypeptide reads, in one-letter code: MTMMIITVFLTVIAAVLAILVKNSQTGSGIFAPPEISGSRDVFPSAKVVNLTGASGPESIAFDPAGEGPYVGVSDGRILKWRGEPLGWSDFAHTSSNRQECARPFAPELEHVCGRPLGLRFDKKTGDLYIADAYFGLLVVGPAGGLAKPLVTEAEGQPFRFTNDLDIDEQEDVIYFTDTSARFQRRQFLAAVLNVDKTGRFIKYDRSSKKATVLLQGLAFANGVALSKDRSFVLVVETTTCKILRLWLSGPNAGTHQVFAELPGFPDNIRRNSNGEFWVALHSKKGLFAKLSLTQTWFRDLVLRLPISPQRLHSLFTGGIPHATAIKLSESGKVLEVLEDKEGKTLRFISEVEEKDGKLWIGSVLVPFLGVYDL.

The N-terminal stretch at 1 to 18 (MTMMIITVFLTVIAAVLA) is a signal peptide. N50 carries N-linked (GlcNAc...) asparagine glycosylation.

It belongs to the strictosidine synthase family.

The protein resides in the vacuole. The protein is Protein STRICTOSIDINE SYNTHASE-LIKE 10 of Arabidopsis thaliana (Mouse-ear cress).